A 741-amino-acid chain; its full sequence is Cellulose 1,4-beta-cellobiosidase (reducing end) CelS (741 aa).

An N-terminal signal peptide occupies residues 1-27 (MVKSRKISILLAVAMLVSIMIPTTAFA). Position 76 (Glu76) interacts with substrate. Glu87 acts as the Proton donor in catalysis. Residues Thr140, Asn204, Asp241, Gln247, and 251 to 252 (TN) contribute to the substrate site. Asp255 functions as the Nucleophile in the catalytic mechanism. Residues 301–302 (KY), 326–327 (WY), Tyr421, Asp520, and 645–646 (WH) contribute to the substrate site. The region spanning 673 to 739 (STKLYGDVND…ILKEIDTLPY (67 aa)) is the Dockerin domain. 12 residues coordinate Ca(2+): Asp679, Asn681, Asp683, Gly684, Lys685, Asp690, Asp711, Leu712, Asn713, Asp715, Arg717, and Asp722.

Belongs to the glycosyl hydrolase 48 (cellulase L) family.

It localises to the secreted. It catalyses the reaction Hydrolysis of (1-&gt;4)-beta-D-glucosidic linkages in cellulose and similar substrates, releasing cellobiose from the reducing ends of the chains.. Its activity is regulated as follows. Inhibited by cellobiose and lactose, but not by glucose. This enzyme catalyzes the exohydrolysis of 1,4-beta-glucosidic linkages in cellulose with a preference for amorphous or crystalline cellulose over carboxymethyl cellulose. This Acetivibrio thermocellus (strain ATCC 27405 / DSM 1237 / JCM 9322 / NBRC 103400 / NCIMB 10682 / NRRL B-4536 / VPI 7372) (Clostridium thermocellum) protein is Cellulose 1,4-beta-cellobiosidase (reducing end) CelS (celS).